Here is a 149-residue protein sequence, read N- to C-terminus: FAD synthase (149 aa).

ATP-binding positions include 9–10 (TF), 14–17 (HPGH), Asn92, and Tyr119.

The protein belongs to the archaeal FAD synthase family. As to quaternary structure, homodimer. It depends on a divalent metal cation as a cofactor.

It carries out the reaction FMN + ATP + H(+) = FAD + diphosphate. The protein operates within cofactor biosynthesis; FAD biosynthesis; FAD from FMN: step 1/1. Its function is as follows. Catalyzes the transfer of the AMP portion of ATP to flavin mononucleotide (FMN) to produce flavin adenine dinucleotide (FAD) coenzyme. In Methanoculleus marisnigri (strain ATCC 35101 / DSM 1498 / JR1), this protein is FAD synthase.